The following is a 293-amino-acid chain: NAD-dependent protein deacetylase (293 aa).

The Deacetylase sirtuin-type domain occupies 1–284; sequence MTVAITQTGP…QPPDPLHTAT (284 aa). Residues 27 to 47 and 105 to 108 each bind NAD(+); these read GAGC…GGWK and QNVD. The active-site Proton acceptor is the H123. Zn(2+) is bound by residues C131, C134, C182, and C185. NAD(+) is bound by residues 222–224, 248–250, and C266; these read GSS and NFG.

Belongs to the sirtuin family. Class II subfamily. The cofactor is Zn(2+).

The protein localises to the cytoplasm. The catalysed reaction is N(6)-acetyl-L-lysyl-[protein] + NAD(+) + H2O = 2''-O-acetyl-ADP-D-ribose + nicotinamide + L-lysyl-[protein]. Functionally, NAD-dependent protein deacetylase which modulates the activities of several enzymes which are inactive in their acetylated form. The chain is NAD-dependent protein deacetylase from Xanthomonas campestris pv. campestris (strain B100).